We begin with the raw amino-acid sequence, 74 residues long: Protein krueppel (74 aa).

C2H2-type zinc fingers lie at residues 1–4 (ERTH), 10–32 (FECQECHKRFTRDHHLKTHMRLH), 38–60 (YRCEHCDRQFVQVANLRRHLRVH), and 66–74 (YGCEHCSMK).

The protein belongs to the krueppel C2H2-type zinc-finger protein family.

Its subcellular location is the nucleus. Functionally, krueppel is a gap class segmentation protein. The polypeptide is Protein krueppel (Kr) (Tribolium castaneum (Red flour beetle)).